The following is a 209-amino-acid chain: Transcription antitermination protein NusB (209 aa).

Belongs to the NusB family.

Involved in transcription antitermination. Required for transcription of ribosomal RNA (rRNA) genes. Binds specifically to the boxA antiterminator sequence of the ribosomal RNA (rrn) operons. This chain is Transcription antitermination protein NusB, found in Crocosphaera subtropica (strain ATCC 51142 / BH68) (Cyanothece sp. (strain ATCC 51142)).